Here is a 62-residue protein sequence, read N- to C-terminus: Conotoxin Im11.9 (62 aa).

Positions 1–22 are cleaved as a signal peptide; sequence MFRVTSVLLVIVLLNLVVLTNA. Cystine bridges form between cysteine 23–cysteine 33, cysteine 27–cysteine 38, cysteine 32–cysteine 41, and cysteine 37–cysteine 46. Residues 23-49 constitute a propeptide that is removed on maturation; it reads CHMDCSKMTCCSGICCFYCGRPMCPGT.

The protein belongs to the conotoxin I2 superfamily. Expressed by the venom duct.

The protein localises to the secreted. Probable neurotoxin. The protein is Conotoxin Im11.9 of Conus imperialis (Imperial cone).